A 331-amino-acid polypeptide reads, in one-letter code: Lipoyl synthase (331 aa).

A disordered region spans residues 1 to 33; that stretch reads MSDALIASSSEAPQSPAEQYDPTRKQKSADKTA. Low complexity predominate over residues 7–19; the sequence is ASSSEAPQSPAEQ. Residues 21-33 show a composition bias toward basic and acidic residues; that stretch reads DPTRKQKSADKTA. [4Fe-4S] cluster contacts are provided by Cys78, Cys83, Cys89, Cys104, Cys108, Cys111, and Ser318. The region spanning 89–307 is the Radical SAM core domain; sequence CFGKGTATFM…EEEAYKMGFT (219 aa).

Belongs to the radical SAM superfamily. Lipoyl synthase family. Requires [4Fe-4S] cluster as cofactor.

It is found in the cytoplasm. The catalysed reaction is [[Fe-S] cluster scaffold protein carrying a second [4Fe-4S](2+) cluster] + N(6)-octanoyl-L-lysyl-[protein] + 2 oxidized [2Fe-2S]-[ferredoxin] + 2 S-adenosyl-L-methionine + 4 H(+) = [[Fe-S] cluster scaffold protein] + N(6)-[(R)-dihydrolipoyl]-L-lysyl-[protein] + 4 Fe(3+) + 2 hydrogen sulfide + 2 5'-deoxyadenosine + 2 L-methionine + 2 reduced [2Fe-2S]-[ferredoxin]. It participates in protein modification; protein lipoylation via endogenous pathway; protein N(6)-(lipoyl)lysine from octanoyl-[acyl-carrier-protein]: step 2/2. Its function is as follows. Catalyzes the radical-mediated insertion of two sulfur atoms into the C-6 and C-8 positions of the octanoyl moiety bound to the lipoyl domains of lipoate-dependent enzymes, thereby converting the octanoylated domains into lipoylated derivatives. The chain is Lipoyl synthase from Cupriavidus pinatubonensis (strain JMP 134 / LMG 1197) (Cupriavidus necator (strain JMP 134)).